A 119-amino-acid polypeptide reads, in one-letter code: uncharacterized protein (119 aa).

The segment at 78–119 (SHRKSQQHQTQGNQVLRGTRKLESPTVGPRPGLRRQHTRNFL) is disordered. Polar residues predominate over residues 84–93 (QHQTQGNQVL). The span at 109 to 119 (GLRRQHTRNFL) shows a compositional bias: basic residues.

This is an uncharacterized protein from Saccharomyces cerevisiae (strain ATCC 204508 / S288c) (Baker's yeast).